The sequence spans 442 residues: Probable xylan O-acetyltransferase 8 (442 aa).

Over 1-13 the chain is Cytoplasmic; it reads MVQLPAMKRVKGR. The chain crosses the membrane as a helical; Signal-anchor for type II membrane protein span at residues 14-34; the sequence is APLSVVVAIIGGLALAGIIFT. Over 35-442 the chain is Lumenal; the sequence is EDLRGLTEVK…TWNRLLYAHL (408 aa). A glycan (N-linked (GlcNAc...) asparagine) is linked at Asn96. 4 disulfides stabilise this stretch: Cys100/Cys151, Cys122/Cys187, Cys131/Cys426, and Cys344/Cys422. The GDS motif signature appears at 174–176; the sequence is GDS. Ser176 serves as the catalytic Nucleophile. N-linked (GlcNAc...) asparagine glycans are attached at residues Asn217, Asn346, and Asn384. The active-site Proton donor is the Asp421. The DXXH motif signature appears at 421-424; that stretch reads DCIH. The active-site Proton acceptor is the His424.

The protein belongs to the PC-esterase family. TBL subfamily.

It is found in the golgi apparatus membrane. Probable xylan acetyltransferase required for 2-O- and 3-O-monoacetylation of xylosyl residues in xylan. Possesses extremely low activity in vitro. In Oryza sativa subsp. japonica (Rice), this protein is Probable xylan O-acetyltransferase 8.